A 216-amino-acid chain; its full sequence is Outer-membrane lipoprotein LolB (216 aa).

An N-terminal signal peptide occupies residues 1–21 (MLIFKICFYRLLPLSVLLLAA). The N-palmitoyl cysteine moiety is linked to residue Cys22. Residue Cys22 is the site of S-diacylglycerol cysteine attachment.

Belongs to the LolB family. In terms of assembly, monomer.

The protein localises to the cell outer membrane. Its function is as follows. Plays a critical role in the incorporation of lipoproteins in the outer membrane after they are released by the LolA protein. This chain is Outer-membrane lipoprotein LolB, found in Hamiltonella defensa subsp. Acyrthosiphon pisum (strain 5AT).